The sequence spans 446 residues: Telomere-binding protein 51 kDa subunit (446 aa).

It belongs to the telombin family. In terms of assembly, monomer.

The protein localises to the nucleus. It localises to the chromosome. The protein resides in the telomere. In terms of biological role, may function as protective capping of the single-stranded telomeric overhang. May also participate in telomere length regulation during DNA replication. Binds specifically to the T4G4-containing extension on the 3'strand and protects this region of the telomere from nuclease digestion and chemical modification. The chain is Telomere-binding protein 51 kDa subunit from Euplotes crassus.